A 450-amino-acid chain; its full sequence is Sorting nexin-4 (450 aa).

M1 is subject to N-acetylmethionine. The interval 1–53 is disordered; it reads MEQAAPDPERLWQPAPLEPLSHPDAGLESMVGEETKGARDEGPGDGTMTENNF. Basic and acidic residues predominate over residues 33-42; sequence EETKGARDEG. Residues 61–187 enclose the PX domain; it reads SVSEAEKRTG…YLFLTQEGNW (127 aa). R106, S108, K132, and R154 together coordinate a 1,2-diacyl-sn-glycero-3-phospho-(1D-myo-inositol-3-phosphate).

Belongs to the sorting nexin family. Heterodimer; heterodimerizes with SNX7 or SNX30. Interacts with WWC1/KIBRA. Identified in a complex with WWC1/KIBRA and dynein components DYNLL1 and DYNC1I2. Interacts with BIN1.

Its subcellular location is the early endosome. It localises to the early endosome membrane. Functionally, involved in the regulation of endocytosis and in several stages of intracellular trafficking. Plays a role in recycling endocytosed transferrin receptor and prevent its degradation. Involved in autophagosome assembly by regulating trafficking and recycling of phospholipid scramblase ATG9A. The protein is Sorting nexin-4 of Bos taurus (Bovine).